The primary structure comprises 279 residues: uncharacterized protein (279 aa).

3 stretches are compositionally biased toward low complexity: residues 1–25 (MNENNKNNSSEDLNNNNNNNNNNNN), 86–151 (PSQS…NGNN), and 232–250 (NKNNNNNNNNDNNNNDDNN). 3 disordered regions span residues 1–27 (MNENNKNNSSEDLNNNNNNNNNNNNIK), 83–153 (NLFP…NNID), and 213–260 (QSVN…KVKS).

This is an uncharacterized protein from Dictyostelium discoideum (Social amoeba).